A 328-amino-acid chain; its full sequence is Phenylalanine--tRNA ligase alpha subunit (328 aa).

Glutamate 245 serves as a coordination point for Mg(2+).

This sequence belongs to the class-II aminoacyl-tRNA synthetase family. Phe-tRNA synthetase alpha subunit type 1 subfamily. In terms of assembly, tetramer of two alpha and two beta subunits. Requires Mg(2+) as cofactor.

The protein localises to the cytoplasm. It carries out the reaction tRNA(Phe) + L-phenylalanine + ATP = L-phenylalanyl-tRNA(Phe) + AMP + diphosphate + H(+). This Helicobacter pylori (strain ATCC 700392 / 26695) (Campylobacter pylori) protein is Phenylalanine--tRNA ligase alpha subunit (pheS).